Consider the following 204-residue polypeptide: Small ribosomal subunit protein uS4c (204 aa).

The S4 RNA-binding domain maps to 90–150 (MRLDNILYRL…GKKTDQLKTI (61 aa)).

The protein belongs to the universal ribosomal protein uS4 family. In terms of assembly, part of the 30S ribosomal subunit. Contacts protein S5. The interaction surface between S4 and S5 is involved in control of translational fidelity.

It is found in the plastid. It localises to the chloroplast. In terms of biological role, one of the primary rRNA binding proteins, it binds directly to 16S rRNA where it nucleates assembly of the body of the 30S subunit. Functionally, with S5 and S12 plays an important role in translational accuracy. This Gnetum parvifolium (Small-leaved jointfir) protein is Small ribosomal subunit protein uS4c (rps4).